The primary structure comprises 354 residues: Ferrochelatase (354 aa).

2 residues coordinate Fe cation: histidine 214 and glutamate 295.

This sequence belongs to the ferrochelatase family.

Its subcellular location is the cytoplasm. It carries out the reaction heme b + 2 H(+) = protoporphyrin IX + Fe(2+). The protein operates within porphyrin-containing compound metabolism; protoheme biosynthesis; protoheme from protoporphyrin-IX: step 1/1. Its function is as follows. Catalyzes the ferrous insertion into protoporphyrin IX. This Burkholderia ambifaria (strain ATCC BAA-244 / DSM 16087 / CCUG 44356 / LMG 19182 / AMMD) (Burkholderia cepacia (strain AMMD)) protein is Ferrochelatase.